The primary structure comprises 341 residues: Phenylalanine--tRNA ligase alpha subunit (341 aa).

Glu-254 provides a ligand contact to Mg(2+).

It belongs to the class-II aminoacyl-tRNA synthetase family. Phe-tRNA synthetase alpha subunit type 1 subfamily. In terms of assembly, tetramer of two alpha and two beta subunits. The cofactor is Mg(2+).

It is found in the cytoplasm. It carries out the reaction tRNA(Phe) + L-phenylalanine + ATP = L-phenylalanyl-tRNA(Phe) + AMP + diphosphate + H(+). The polypeptide is Phenylalanine--tRNA ligase alpha subunit (Chlorobium phaeovibrioides (strain DSM 265 / 1930) (Prosthecochloris vibrioformis (strain DSM 265))).